Here is a 469-residue protein sequence, read N- to C-terminus: RuvB-like helicase 2 (469 aa).

76–83 (GPPSTGKT) provides a ligand contact to ATP.

This sequence belongs to the RuvB family. In terms of assembly, may form heterododecamers with RVB1. Component of the SWR1 chromatin remodeling complex, the INO80 chromatin remodeling complex, and of the R2TP complex.

The protein resides in the nucleus. The catalysed reaction is ATP + H2O = ADP + phosphate + H(+). Functionally, DNA helicase which participates in several chromatin remodeling complexes, including the SWR1 and the INO80 complexes. The SWR1 complex mediates the ATP-dependent exchange of histone H2A for the H2A variant HZT1 leading to transcriptional regulation of selected genes by chromatin remodeling. The INO80 complex remodels chromatin by shifting nucleosomes and is involved in DNA repair. Also involved in pre-rRNA processing. This chain is RuvB-like helicase 2 (rvb2), found in Aspergillus fumigatus (strain ATCC MYA-4609 / CBS 101355 / FGSC A1100 / Af293) (Neosartorya fumigata).